We begin with the raw amino-acid sequence, 95 residues long: Aspartyl/glutamyl-tRNA(Asn/Gln) amidotransferase subunit C (95 aa).

It belongs to the GatC family. In terms of assembly, heterotrimer of A, B and C subunits.

The catalysed reaction is L-glutamyl-tRNA(Gln) + L-glutamine + ATP + H2O = L-glutaminyl-tRNA(Gln) + L-glutamate + ADP + phosphate + H(+). It carries out the reaction L-aspartyl-tRNA(Asn) + L-glutamine + ATP + H2O = L-asparaginyl-tRNA(Asn) + L-glutamate + ADP + phosphate + 2 H(+). Its function is as follows. Allows the formation of correctly charged Asn-tRNA(Asn) or Gln-tRNA(Gln) through the transamidation of misacylated Asp-tRNA(Asn) or Glu-tRNA(Gln) in organisms which lack either or both of asparaginyl-tRNA or glutaminyl-tRNA synthetases. The reaction takes place in the presence of glutamine and ATP through an activated phospho-Asp-tRNA(Asn) or phospho-Glu-tRNA(Gln). The sequence is that of Aspartyl/glutamyl-tRNA(Asn/Gln) amidotransferase subunit C from Chlorobaculum parvum (strain DSM 263 / NCIMB 8327) (Chlorobium vibrioforme subsp. thiosulfatophilum).